Reading from the N-terminus, the 745-residue chain is uncharacterized protein (745 aa).

The HTH araC/xylS-type domain occupies 158-256 (NQVCDYIELH…HQTPKQYRGD (99 aa)). 2 DNA-binding regions (H-T-H motif) span residues 175-196 (SELS…TESL) and 223-246 (ITDI…KHFT).

This is an uncharacterized protein from Staphylococcus aureus (strain COL).